The sequence spans 461 residues: Protein transport protein HofB homolog (461 aa).

222-229 is a binding site for ATP; sequence GPTGSGKT.

Belongs to the GSP E family.

The sequence is that of Protein transport protein HofB homolog (hofB) from Escherichia coli (strain K12).